The primary structure comprises 303 residues: Elongation factor Ts (303 aa).

An involved in Mg(2+) ion dislocation from EF-Tu region spans residues 82 to 85; it reads TDFV.

This sequence belongs to the EF-Ts family.

Its subcellular location is the cytoplasm. Its function is as follows. Associates with the EF-Tu.GDP complex and induces the exchange of GDP to GTP. It remains bound to the aminoacyl-tRNA.EF-Tu.GTP complex up to the GTP hydrolysis stage on the ribosome. The polypeptide is Elongation factor Ts (Clostridioides difficile (strain 630) (Peptoclostridium difficile)).